The sequence spans 136 residues: uncharacterized protein (136 aa).

The chain crosses the membrane as a helical span at residues 40-62 (LFYSISLCVSLLLHISLCVSVYV).

It is found in the membrane. This is an uncharacterized protein from Homo sapiens (Human).